We begin with the raw amino-acid sequence, 346 residues long: Free fatty acid receptor 3 (346 aa).

Residues 1 to 19 (MDTGPDQSYFSGNHWFVFS) are Extracellular-facing. A helical membrane pass occupies residues 20–40 (VYLLTFLVGLPLNLLALVVFV). Residues 41-47 (GKLQRRP) are Cytoplasmic-facing. A helical transmembrane segment spans residues 48-68 (VAVDVLLLNLTASDLLLLLFL). The Extracellular segment spans residues 69 to 88 (PFRMVEAANGMHWPLPFILC). C88 and C169 are joined by a disulfide. A helical transmembrane segment spans residues 89–111 (PLSGFIFFTTIYLTALFLAAVSI). Residues 112–132 (ERFLSVAHPLWYKTRPRLGQA) lie on the Cytoplasmic side of the membrane. The helical transmembrane segment at 133 to 153 (GLVSVACWLLASAHCSVVYVI) threads the bilayer. Residues 154–178 (EFSGDISHSQGTNGTCYLEFRKDQL) lie on the Extracellular side of the membrane. Residue N166 is glycosylated (N-linked (GlcNAc...) asparagine). The helical transmembrane segment at 179–199 (AILLPVRLEMAVVLFVVPLII) threads the bilayer. Over 200 to 222 (TSYCYSRLVWILGRGGSHRRQRR) the chain is Cytoplasmic. The helical transmembrane segment at 223 to 243 (VAGLLAATLLNFLVCFGPYNV) threads the bilayer. Residues 244-258 (SHVVGYICGESPAWR) are Extracellular-facing. Residues 259-279 (IYVTLLSTLNSCVDPFVYYFS) form a helical membrane-spanning segment. Over 280–346 (SSGFQADFHE…TGGQVACAES (67 aa)) the chain is Cytoplasmic. A compositionally biased stretch (basic and acidic residues) spans 307-330 (MELKEQKGGEEQRADRPAERKTSE). A disordered region spans residues 307 to 346 (MELKEQKGGEEQRADRPAERKTSEHSQGCGTGGQVACAES).

The protein belongs to the G-protein coupled receptor 1 family. As to expression, highest level in adipose tissue, and lower expression across all tissues tested. Expressed in sympathetic ganglia.

The protein localises to the cell membrane. In terms of biological role, g protein-coupled receptor that is activated by a major product of dietary fiber digestion, the short chain fatty acids (SCFAs), and that plays a role in the regulation of whole-body energy homeostasis and in intestinal immunity. In omnivorous mammals, the short chain fatty acids acetate, propionate and butyrate are produced primarily by the gut microbiome that metabolizes dietary fibers. SCFAs serve as a source of energy but also act as signaling molecules. That G protein-coupled receptor is probably coupled to the pertussis toxin-sensitive, G(i/o)-alpha family of G proteins. Its activation results in the formation of inositol 1,4,5-trisphosphate, the mobilization of intracellular calcium, the phosphorylation of the MAPK3/ERK1 and MAPK1/ERK2 kinases and the inhibition of intracellular cAMP accumulation. Activated by SCFAs and by beta-hydroxybutyrate, a ketone body produced by the liver upon starvation, it inhibits N-type calcium channels and modulates the activity of sympathetic neurons through a signaling cascade involving the beta and gamma subunits of its coupled G protein, phospholipase C and MAP kinases. Thereby, it may regulate energy expenditure through the control of the sympathetic nervous system that controls for instance heart rate. Upon activation by SCFAs accumulating in the intestine, it may also signal to the brain via neural circuits which in turn would regulate intestinal gluconeogenesis. May also control the production of hormones involved in whole-body energy homeostasis. May for instance, regulate blood pressure through renin secretion. May also regulate secretion of the PYY peptide by enteroendocrine cells and control gut motility, intestinal transit rate, and the harvesting of energy from SCFAs produced by gut microbiota. May also indirectly regulate the production of LEP/Leptin, a hormone acting on the CNS to inhibit food intake, in response to the presence of short-chain fatty acids in the intestine. Finally, may also play a role in glucose homeostasis. Besides its role in energy homeostasis, may play a role in intestinal immunity. May mediate the activation of the inflammatory and immune response by SCFAs in the gut, regulating the rapid production of chemokines and cytokines by intestinal epithelial cells. Among SCFAs, the fatty acids containing less than 6 carbons, the most potent activators are probably propionate, butyrate and pentanoate while acetate is a poor activator. This is Free fatty acid receptor 3 (FFAR3) from Homo sapiens (Human).